Consider the following 105-residue polypeptide: UPF0235 protein RPR_04990 (105 aa).

Belongs to the UPF0235 family.

The chain is UPF0235 protein RPR_04990 from Rickettsia peacockii (strain Rustic).